The primary structure comprises 381 residues: uncharacterized protein (381 aa).

The disordered stretch occupies residues His-176–Asn-292. Over residues Ala-177–Asn-186 the composition is skewed to basic residues. Residues Gln-187 to Glu-212 are compositionally biased toward basic and acidic residues. Residues Asp-276–Val-286 are compositionally biased toward acidic residues.

This is an uncharacterized protein from Caenorhabditis elegans.